The primary structure comprises 103 residues: uncharacterized protein (103 aa).

A run of 3 helical transmembrane segments spans residues 1–21 (MPGV…VFLS), 29–49 (IAFI…TGYF), and 69–89 (VVEW…GLLF).

The protein localises to the cell membrane. This is an uncharacterized protein from Methanocaldococcus jannaschii (strain ATCC 43067 / DSM 2661 / JAL-1 / JCM 10045 / NBRC 100440) (Methanococcus jannaschii).